The following is a 426-amino-acid chain: Gamma-glutamyl phosphate reductase (426 aa).

This sequence belongs to the gamma-glutamyl phosphate reductase family.

It is found in the cytoplasm. The enzyme catalyses L-glutamate 5-semialdehyde + phosphate + NADP(+) = L-glutamyl 5-phosphate + NADPH + H(+). It functions in the pathway amino-acid biosynthesis; L-proline biosynthesis; L-glutamate 5-semialdehyde from L-glutamate: step 2/2. Functionally, catalyzes the NADPH-dependent reduction of L-glutamate 5-phosphate into L-glutamate 5-semialdehyde and phosphate. The product spontaneously undergoes cyclization to form 1-pyrroline-5-carboxylate. The chain is Gamma-glutamyl phosphate reductase from Deinococcus geothermalis (strain DSM 11300 / CIP 105573 / AG-3a).